The primary structure comprises 171 residues: SPbeta prophage-derived uncharacterized protein YokC (171 aa).

This is SPbeta prophage-derived uncharacterized protein YokC (yokC) from Bacillus subtilis (strain 168).